Consider the following 128-residue polypeptide: Large ribosomal subunit protein bL12 (128 aa).

The protein belongs to the bacterial ribosomal protein bL12 family. As to quaternary structure, homodimer. Part of the ribosomal stalk of the 50S ribosomal subunit. Forms a multimeric L10(L12)X complex, where L10 forms an elongated spine to which 2 to 4 L12 dimers bind in a sequential fashion. Binds GTP-bound translation factors.

Its function is as follows. Forms part of the ribosomal stalk which helps the ribosome interact with GTP-bound translation factors. Is thus essential for accurate translation. The sequence is that of Large ribosomal subunit protein bL12 from Thermotoga petrophila (strain ATCC BAA-488 / DSM 13995 / JCM 10881 / RKU-1).